A 150-amino-acid chain; its full sequence is Phylloplanin (150 aa).

An N-terminal signal peptide occupies residues 1 to 23 (MASAKIFLIFLLAALIATPAAFA).

Probably covalently linked to cuticular lipids and/or trichome exudate diterpens or sugar esters in order to increase the solubility in exudate and the dispersion on the leaf surface. Expressed in small glandular secreting trichomes (SGTs).

It localises to the secreted. Functionally, inhibits spore germination and leaf infection by fungal pathogens. The chain is Phylloplanin from Nicotiana tabacum (Common tobacco).